Here is a 367-residue protein sequence, read N- to C-terminus: Flagellar P-ring protein (367 aa).

An N-terminal signal peptide occupies residues 1-21; sequence MYVFKALAGIVLALVATLAHA.

It belongs to the FlgI family. As to quaternary structure, the basal body constitutes a major portion of the flagellar organelle and consists of four rings (L,P,S, and M) mounted on a central rod.

The protein resides in the periplasm. The protein localises to the bacterial flagellum basal body. Its function is as follows. Assembles around the rod to form the L-ring and probably protects the motor/basal body from shearing forces during rotation. The polypeptide is Flagellar P-ring protein (Salmonella arizonae (strain ATCC BAA-731 / CDC346-86 / RSK2980)).